A 148-amino-acid chain; its full sequence is UPF0178 protein lpl0088 (148 aa).

The protein belongs to the UPF0178 family.

The chain is UPF0178 protein lpl0088 from Legionella pneumophila (strain Lens).